Consider the following 767-residue polypeptide: DNA topoisomerase 1 (767 aa).

Positions 1 to 23 (MSGDHLHNDSQIEADFRLNDSHK) are enriched in basic and acidic residues. The segment at 1–201 (MSGDHLHNDS…NKKKKPKKEE (201 aa)) is disordered. Ser2 carries the post-translational modification N-acetylserine. 2 positions are modified to phosphoserine: Ser2 and Ser10. The segment covering 24–39 (HKDKHKDREHRHKEHK) has biased composition (basic residues). The segment covering 40-110 (KDKDKDREKS…DAKIKKEKEN (71 aa)) has biased composition (basic and acidic residues). At Ser59 the chain carries Phosphoserine. Lys103 participates in a covalent cross-link: Glycyl lysine isopeptide (Lys-Gly) (interchain with G-Cter in SUMO2). Lys105 is covalently cross-linked (Glycyl lysine isopeptide (Lys-Gly) (interchain with G-Cter in SUMO); alternate). Lys105 is covalently cross-linked (Glycyl lysine isopeptide (Lys-Gly) (interchain with G-Cter in SUMO2); alternate). Residue Ser114 is modified to Phosphoserine. Lys119 participates in a covalent cross-link: Glycyl lysine isopeptide (Lys-Gly) (interchain with G-Cter in SUMO); alternate. Lys119 is covalently cross-linked (Glycyl lysine isopeptide (Lys-Gly) (interchain with G-Cter in SUMO2); alternate). A Glycyl lysine isopeptide (Lys-Gly) (interchain with G-Cter in SUMO1); alternate cross-link involves residue Lys119. Residues 131–168 (PKEDIKPLKRLRDEDDADYKPKKIKTEDIKKEKKRKSE) are compositionally biased toward basic and acidic residues. Residues Lys136 and Lys150 each participate in a glycyl lysine isopeptide (Lys-Gly) (interchain with G-Cter in SUMO2) cross-link. Lys155 participates in a covalent cross-link: Glycyl lysine isopeptide (Lys-Gly) (interchain with G-Cter in SUMO); alternate. Residue Lys155 forms a Glycyl lysine isopeptide (Lys-Gly) (interchain with G-Cter in SUMO2); alternate linkage. Glycyl lysine isopeptide (Lys-Gly) (interchain with G-Cter in SUMO2) cross-links involve residues Lys160 and Lys166. Residue Lys174 forms a Glycyl lysine isopeptide (Lys-Gly) (interchain with G-Cter in SUMO2); alternate linkage. Position 174 is an N6-acetyllysine; alternate (Lys174). Over residues 181-201 (KDKDKKVAEPDNKKKKPKKEE) the composition is skewed to basic and acidic residues. Lys206 is covalently cross-linked (Glycyl lysine isopeptide (Lys-Gly) (interchain with G-Cter in SUMO2)). N6-acetyllysine is present on Lys282. A Glycyl lysine isopeptide (Lys-Gly) (interchain with G-Cter in SUMO2) cross-link involves residue Lys338. Interaction with DNA regions lie at residues 427–428 (KY) and 490–495 (RAGNEK). The 334-residue stretch at 434–767 (SSRIKGEKDW…IDMTDEDYEF (334 aa)) folds into the Topo IB-type catalytic domain. Ser508 bears the Phosphoserine; by CK2 mark. Lys551 is covalently cross-linked (Glycyl lysine isopeptide (Lys-Gly) (interchain with G-Cter in SUMO2)). Residues 587–589 (TAK) are interaction with DNA. Residues Lys644, Lys702, and Lys714 each participate in a glycyl lysine isopeptide (Lys-Gly) (interchain with G-Cter in SUMO2) cross-link. Residue Tyr725 is the O-(3'-phospho-DNA)-tyrosine intermediate of the active site.

Belongs to the type IB topoisomerase family. Monomer. Interacts with ERCC6. Interacts with TPRN; TPRN interacts with a number of DNA damage response proteins, is recruited to sites of DNA damage and may play a role in DNA damage repair. Sumoylated. Lys-119 is the main site of sumoylation. Sumoylation plays a role in partitioning TOP1 between nucleoli and nucleoplasm. Levels are dramatically increased on camptothecin (CPT) treatment. Post-translationally, phosphorylation at Ser-508 by CK2 increases binding to supercoiled DNA and sensitivity to camptothecin.

Its subcellular location is the nucleus. The protein resides in the nucleolus. It localises to the nucleoplasm. It catalyses the reaction ATP-independent breakage of single-stranded DNA, followed by passage and rejoining.. In terms of biological role, releases the supercoiling and torsional tension of DNA introduced during the DNA replication and transcription by transiently cleaving and rejoining one strand of the DNA duplex. Introduces a single-strand break via transesterification at a target site in duplex DNA. The scissile phosphodiester is attacked by the catalytic tyrosine of the enzyme, resulting in the formation of a DNA-(3'-phosphotyrosyl)-enzyme intermediate and the expulsion of a 5'-OH DNA strand. The free DNA strand then rotates around the intact phosphodiester bond on the opposing strand, thus removing DNA supercoils. Finally, in the religation step, the DNA 5'-OH attacks the covalent intermediate to expel the active-site tyrosine and restore the DNA phosphodiester backbone. Regulates the alternative splicing of tissue factor (F3) pre-mRNA in endothelial cells. Involved in the circadian transcription of the core circadian clock component BMAL1 by altering the chromatin structure around the ROR response elements (ROREs) on the BMAL1 promoter. This Mus musculus (Mouse) protein is DNA topoisomerase 1 (Top1).